We begin with the raw amino-acid sequence, 194 residues long: Archaetidylinositol phosphate synthase (194 aa).

The next 2 helical transmembrane spans lie at 32-51 and 58-78; these read IYTL…WLYI and LLIA…RFTG. Positions 67, 70, 88, and 92 each coordinate Mg(2+). Catalysis depends on Asp-92, which acts as the Proton acceptor. 3 consecutive transmembrane segments (helical) span residues 103 to 123, 150 to 170, and 172 to 192; these read LYIA…GLIV, IAIL…LALA, and AAAV…AGEL.

The protein belongs to the CDP-alcohol phosphatidyltransferase class-I family. Requires Mn(2+) as cofactor. The cofactor is Mg(2+).

The protein resides in the cell membrane. The enzyme catalyses CDP-2,3-bis-O-(phytanyl)-sn-glycerol + 1D-myo-inositol 3-phosphate = saturated 1-archaetidyl-1D-myo-inositol 3-phosphate + CMP + H(+). Its pathway is lipid metabolism; phospholipid metabolism. Catalyzes the formation of archaetidylinositol phosphate (AIP) from CDP-archaeol (CDP-ArOH or CDP-2,3-bis-(O-phytanyl)-sn-glycerol) and 1L-myo-inositol 1-phosphate (IP or 1D-myo-inositol 3-phosphate). AIP is a precursor of archaetidyl-myo-inositol (AI), an ether-type inositol phospholipid ubiquitously distributed in archaea membranes and essential for glycolipid biosynthesis in archaea. This chain is Archaetidylinositol phosphate synthase, found in Aeropyrum pernix (strain ATCC 700893 / DSM 11879 / JCM 9820 / NBRC 100138 / K1).